A 313-amino-acid polypeptide reads, in one-letter code: Cytochrome c biogenesis protein CcsA (313 aa).

8 helical membrane passes run 9–29 (ILTHISFSIVSIVITIHLITF), 44–64 (GIIVTFFCITGLLVTRWVSSG), 71–91 (LYESLIFLSWSFSLIHIIPYF), 111–131 (GFATSGILTEIHQSGILVPAL), 143–163 (MILGYAALLCGSLLSVALLVI), 217–237 (VISLGFTFLTIGILSGAVWAN), 244–264 (WNWDPKETWAFITWIVFAIYL), and 278–298 (AIVASIGFLIIWICYFGVNLL).

This sequence belongs to the CcmF/CycK/Ccl1/NrfE/CcsA family. As to quaternary structure, may interact with Ccs1.

It is found in the plastid. It localises to the chloroplast thylakoid membrane. Functionally, required during biogenesis of c-type cytochromes (cytochrome c6 and cytochrome f) at the step of heme attachment. This chain is Cytochrome c biogenesis protein CcsA, found in Solanum lycopersicum (Tomato).